We begin with the raw amino-acid sequence, 317 residues long: Protease 7 (317 aa).

Positions 1–20 (MRAKLLGIVLTTPIAISSFA) are cleaved as a signal peptide. Over 21-31 (STETLSFTPDN) the chain is Periplasmic. A beta stranded membrane pass occupies residues 32–41 (INADISLGTL). Residues 42–69 (SGKTKERVYLAEEGGRKVSQLDWKFNNA) are Extracellular-facing. A beta stranded transmembrane segment spans residues 70–78 (AIIKGAINW). The Periplasmic portion of the chain corresponds to 79 to 83 (DLMPQ). Residues 84–92 (ISIGAAGWT) form a beta stranded membrane-spanning segment. The Extracellular segment spans residues 93–130 (TLGSRGGNMVDQDWMDSSNPGTWTDESRHPDTQLNYAN). Residues Asp103 and Asp105 contribute to the active site. Residues 131–140 (EFDLNIKGWL) traverse the membrane as a beta stranded segment. The Periplasmic portion of the chain corresponds to 141-145 (LNEPN). Residues 146-156 (YRLGLMAGYQE) traverse the membrane as a beta stranded segment. The Extracellular segment spans residues 157 to 197 (SRYSFTARGGSYIYSSEEGFRDDIGSFPNGERAIGYKQRFK). A beta stranded transmembrane segment spans residues 198–209 (MPYIGLTGSYRY). Topologically, residues 210-211 (ED) are periplasmic. The beta stranded transmembrane segment at 212-221 (FELGGTFKYS) threads the bilayer. Topologically, residues 222-250 (GWVEASDNDEHYDPGKRITYRSKVKDQNY) are extracellular. Residues Asp230 and His232 contribute to the active site. A beta stranded membrane pass occupies residues 251 to 261 (YSVSVNAGYYV). The Periplasmic portion of the chain corresponds to 262-264 (TPN). Residues 265–274 (AKVYVEGTWN) traverse the membrane as a beta stranded segment. Residues 275–306 (RVTNKKGNTSLYDHNDNTSDYSKNGAGIENYN) lie on the Extracellular side of the membrane. The beta stranded transmembrane segment at 307–316 (FITTAGLKYT) threads the bilayer. A topological domain (periplasmic) is located at residue Phe317.

It belongs to the peptidase A26 family. Homopentamer.

Its subcellular location is the cell outer membrane. The catalysed reaction is Has a virtual requirement for Arg in the P1 position and a slightly less stringent preference for this residue in the P1' position, which can also contain Lys, Gly or Val.. With respect to regulation, inhibited by zinc. Protease that can cleave T7 RNA polymerase, ferric enterobactin receptor protein (FEP), antimicrobial peptide protamine and other proteins. This protease has a specificity for paired basic residues. This chain is Protease 7 (ompT), found in Escherichia coli O157:H7.